The sequence spans 1080 residues: MNSSALNLIQFLESSKIQVPGGLKSVKGILDFDFYDLVKNIGESTSREEEVHIIQNEIIKLKSCFSKEQSKDKKRECLIRMIYCHMLGYDVPFGHIQALNMTQDSEILNKRTGYLTLSLCLPERHELLIMAVNSILKGLNSSNYLEVCSALTAMCKLIDNDTIPAFLQKVLQLLNHQKPIVRKKSVTVLHRFYRLVGDSFLDDDQIIDKLRQSLCDRDPSVMSASICIFLDISEKHSTLKDNNNQINNNNNNNNSNQIKKKNNEEINRSKNLISMLKELVPSFVGILKQVAEGRLPNSYIYHGIHHPWLQINLLKLLSNLGYQDKDSSNHMYTVLLFTMQQSQKFKNNVGFAILYETIKTLTLIHPNLQLIEQCSKNIAIFLKGKHHNLRYFGIKALASIVKVSPKLVLPYQVEVIESLESPDETLKRKSFDLLYKMTNQTNVVPVCSKLIEQLVLSKDQNFKSELISQITNIAEKYSPNDIWYIDTISTVLSILPNENNKDNNNNNNNNNNNNNNYQFAYNLIRLVSEEDDIKVKQHISEIYLNNIMISNEQQQQQQQENQNNLQQFSDIYIKIMSWVISEYSNLIVSNNGVIESDIISYLCDLLEKDYQGETKSWIIIGIGKLVAQLGKSLPMLELMTKKFKSSKSLICQQRSSELNEILKNPKSMSLILPLDAYCEDIDFNKIFNKFNDYSNKVGGKQYIPYEKRKNTPLVDISDGSSSHSNEKGLNFQYPPPPDPFNPHHNQQQLYPVHQHQPPSNHQQQQQQQQQQQQQQLQLFPQQPQQPQQLLLLGEDDTINLNNNSLVPVNNDQQLQPHQHQQQQQNQQQQQQNQQQQQQQNPQYPNNQLVTVPDQNAPKPIGLPKPSKVLWTKKGFVGNKQTPPQNATPQQQQQQQQQQTQNTLSQQQIQKHQQTHNNIDPEKEKLAKQLFGGFSENNNRNENSNNTDNNQNNVGITSKLQNKKSNNENNINNNKKESYLEELIDLSPNLISNINITNNSNNNNNNNNNNNNNNNNNNNNNNNNNNNLLLVDVEGDEQKEVKNSSCSSGNSELINLNLDENTTKNINGNLLGDDLEELNKN.

HEAT repeat units lie at residues 161–198 (DTIP…LVGD), 201–238 (LDDD…KHST), 369–405 (QLIE…KVSP), 406–443 (KLVL…QTNV), and 445–479 (PVCS…KYSP). Disordered stretches follow at residues 711-782 (TPLV…FPQQ), 801-920 (NNNS…NIDP), 933-973 (FSEN…INNN), and 996-1027 (TNNS…NNNL). Composition is skewed to low complexity over residues 762–782 (QQQQ…FPQQ), 801–847 (NNNS…PNNQ), 878–911 (NKQT…IQKH), 936–952 (NNNR…NQNN), and 962–972 (KKSNNENNINN).

It belongs to the adaptor complexes large subunit family. May be part of the adaptor protein complex 4 (AP-4), a heterotetramer composed of two large adaptins (epsilon-type subunitand beta-type subunit), a medium adaptin (mu-type subunit) and a small adaptin (sigma-type).

Its subcellular location is the golgi apparatus. It is found in the trans-Golgi network membrane. Probable component of an adaptor protein complex. Adaptor protein complexes are vesicle coat components involved both in vesicle formation and cargo selection. They control the vesicular transport of proteins in different trafficking pathways. This is AP-4 complex subunit epsilon from Dictyostelium discoideum (Social amoeba).